The following is a 284-amino-acid chain: D-tagatose-1,6-bisphosphate aldolase subunit GatY (284 aa).

Asp-82 acts as the Proton donor in catalysis. Positions 83 and 180 each coordinate Zn(2+). Gly-181 contacts dihydroxyacetone phosphate. A Zn(2+)-binding site is contributed by His-208. Dihydroxyacetone phosphate is bound by residues 209–211 (GAS) and 230–233 (NVAT).

It belongs to the class II fructose-bisphosphate aldolase family. TagBP aldolase GatY subfamily. As to quaternary structure, forms a complex with GatZ. It depends on Zn(2+) as a cofactor.

The enzyme catalyses D-tagatofuranose 1,6-bisphosphate = D-glyceraldehyde 3-phosphate + dihydroxyacetone phosphate. It participates in carbohydrate metabolism; D-tagatose 6-phosphate degradation; D-glyceraldehyde 3-phosphate and glycerone phosphate from D-tagatose 6-phosphate: step 2/2. In terms of biological role, catalytic subunit of the tagatose-1,6-bisphosphate aldolase GatYZ, which catalyzes the reversible aldol condensation of dihydroxyacetone phosphate (DHAP or glycerone-phosphate) with glyceraldehyde 3-phosphate (G3P) to produce tagatose 1,6-bisphosphate (TBP). Requires GatZ subunit for full activity and stability. Is involved in the catabolism of galactitol. In Escherichia coli (strain K12 / MC4100 / BW2952), this protein is D-tagatose-1,6-bisphosphate aldolase subunit GatY.